The primary structure comprises 1426 residues: Nephrocystin-4 (1426 aa).

Serine 142 is modified (phosphoserine). Disordered stretches follow at residues 450–536 (GSEE…SPAQ) and 896–935 (RQGKGPQDVSRESDATRRRKLERMRSVRLQEAGGDLGRRG). Residues 474 to 486 (KPPTSPSSPPAPV) show a composition bias toward pro residues. A compositionally biased stretch (polar residues) spans 503 to 536 (SISQLAASPRSPTQHCLARPTSQLPHGSQASPAQ). The sufficient for basal bodies localization stretch occupies residues 823–1426 (LTLANVGHPC…EAFCVKVIYQ (604 aa)).

The protein belongs to the NPHP4 family. Interacts with NPHP1. Interacts with NPHP1 and RPGRIP1L/NPHP8; NPHP1, NPHP4 and RPGRIP1L are proposed to form a functional NPHP1-4-8 module localized to cell-cell contacts and the ciliary transition zone; NPHP4 mediates the interaction between NPHP1 and RPGRIP1L. Interacts with IQCB1/NPHP5; the interaction likely requires additional interactors. Interacts with RPGRIP1, CEP164, JADE1, PALS1, INADL, PARD6A, INVS, DVL2, LATS1. Interacts with INTU; INTU mediates the interaction between NPHP4 and DAAM1. Interacts with SPATA7. Expressed in kidney, skeletal muscle, heart and liver, and to a lesser extent in brain and lung.

The protein localises to the cytoplasm. It is found in the cytoskeleton. Its subcellular location is the cilium basal body. It localises to the microtubule organizing center. The protein resides in the centrosome. The protein localises to the cell junction. It is found in the tight junction. Its subcellular location is the nucleus. Functionally, involved in the organization of apical junctions; the function is proposed to implicate a NPHP1-4-8 module. Does not seem to be strictly required for ciliogenesis. Required for building functional cilia. Involved in the organization of the subapical actin network in multiciliated epithelial cells. Seems to recruit INT to basal bodies of motile cilia which subsequently interacts with actin-modifying proteins such as DAAM1. In cooperation with INVS may down-regulate the canonical Wnt pathway and promote the Wnt-PCP pathway by regulating expression and subcellular location of disheveled proteins. Stabilizes protein levels of JADE1 and promotes its translocation to the nucleus leading to cooperative inhibition of canonical Wnt signaling. Acts as a negative regulator of the hippo pathway by association with LATS1 and modifying LATS1-dependent phosphorylation and localization of WWTR1/TAZ. The polypeptide is Nephrocystin-4 (NPHP4) (Homo sapiens (Human)).